Consider the following 64-residue polypeptide: DNA gyrase inhibitor YacG (64 aa).

Residues Cys9, Cys12, Cys28, and Cys32 each coordinate Zn(2+). The interval Lys45–Pro64 is disordered. Positions Ser54 to Pro64 are enriched in acidic residues.

Belongs to the DNA gyrase inhibitor YacG family. Interacts with GyrB. Requires Zn(2+) as cofactor.

Functionally, inhibits all the catalytic activities of DNA gyrase by preventing its interaction with DNA. Acts by binding directly to the C-terminal domain of GyrB, which probably disrupts DNA binding by the gyrase. This chain is DNA gyrase inhibitor YacG, found in Klebsiella pneumoniae (strain 342).